The following is an 826-amino-acid chain: Copper-transporting ATPase 1 (826 aa).

2 HMA domains span residues 15–80 and 82–147; these read APTD…YEPK and IIQE…YDVR. Cu cation is bound by residues Cys26, Cys29, Cys93, and Cys96. A run of 6 helical transmembrane segments spans residues 172 to 192, 209 to 229, 246 to 266, 270 to 290, 429 to 449, and 457 to 477; these read LVIL…GSHF, NLYI…LRFF, LVVL…FASG, SGTA…ILLG, AWFV…WYVF, and FALV…MGLA. Asp514 acts as the 4-aspartylphosphate intermediate in catalysis. Residues Asp713 and Asp717 each contribute to the Mg(2+) site. 2 consecutive transmembrane segments (helical) span residues 772–792 and 795–815; these read FWAF…LYPL and TLLS…FVLG.

It belongs to the cation transport ATPase (P-type) (TC 3.A.3) family. Type IB subfamily.

It localises to the cell membrane. It carries out the reaction Cu(2+)(in) + ATP + H2O = Cu(2+)(out) + ADP + phosphate + H(+). Involved in copper transport. This chain is Copper-transporting ATPase 1 (actP1), found in Rhizobium meliloti (strain 1021) (Ensifer meliloti).